We begin with the raw amino-acid sequence, 474 residues long: tRNA-2-methylthio-N(6)-dimethylallyladenosine synthase (474 aa).

The MTTase N-terminal domain maps to 3–120 (KKLHIKTWGC…LPEMINSVRG (118 aa)). [4Fe-4S] cluster-binding residues include Cys12, Cys49, Cys83, Cys157, Cys161, and Cys164. The Radical SAM core domain maps to 143-375 (RAEGPTAFVS…QERINQQAMA (233 aa)). A TRAM domain is found at 378–441 (RRMLGTVQRI…TNSLRGKVVR (64 aa)).

This sequence belongs to the methylthiotransferase family. MiaB subfamily. In terms of assembly, monomer. Requires [4Fe-4S] cluster as cofactor.

It is found in the cytoplasm. It carries out the reaction N(6)-dimethylallyladenosine(37) in tRNA + (sulfur carrier)-SH + AH2 + 2 S-adenosyl-L-methionine = 2-methylsulfanyl-N(6)-dimethylallyladenosine(37) in tRNA + (sulfur carrier)-H + 5'-deoxyadenosine + L-methionine + A + S-adenosyl-L-homocysteine + 2 H(+). Functionally, catalyzes the methylthiolation of N6-(dimethylallyl)adenosine (i(6)A), leading to the formation of 2-methylthio-N6-(dimethylallyl)adenosine (ms(2)i(6)A) at position 37 in tRNAs that read codons beginning with uridine. The chain is tRNA-2-methylthio-N(6)-dimethylallyladenosine synthase from Citrobacter koseri (strain ATCC BAA-895 / CDC 4225-83 / SGSC4696).